We begin with the raw amino-acid sequence, 355 residues long: Alkanal monooxygenase alpha chain (355 aa).

It belongs to the bacterial luciferase oxidoreductase family. Heterodimer of an alpha and a beta chain.

The catalysed reaction is a long-chain fatty aldehyde + FMNH2 + O2 = a long-chain fatty acid + hnu + FMN + H2O + 2 H(+). Functionally, light-emitting reaction in luminous bacteria. This Vibrio harveyi (Beneckea harveyi) protein is Alkanal monooxygenase alpha chain (luxA).